The chain runs to 135 residues: Transcription antitermination protein NusB (135 aa).

It belongs to the NusB family.

Its function is as follows. Involved in transcription antitermination. Required for transcription of ribosomal RNA (rRNA) genes. Binds specifically to the boxA antiterminator sequence of the ribosomal RNA (rrn) operons. The sequence is that of Transcription antitermination protein NusB from Clostridium perfringens (strain ATCC 13124 / DSM 756 / JCM 1290 / NCIMB 6125 / NCTC 8237 / Type A).